A 1170-amino-acid chain; its full sequence is Anion exchange protein 3 (1170 aa).

The Cytoplasmic segment spans residues 1 to 656; that stretch reads MGRSYNEKDF…DLKDALDTQC (656 aa). Disordered regions lie at residues 17 to 96, 112 to 167, and 239 to 267; these read FHHT…PQLS, FHME…TTRG, and HLVK…RRKR. Residues 32 to 53 show a composition bias toward basic residues; the sequence is RFRKRVLSMDRRRKRKRKKKKT. Residues 67–76 show a composition bias toward acidic residues; sequence VDEEEAESEI. Polar residues predominate over residues 246-259; it reads RCQLPRSSNGSPPL. Helical transmembrane passes span 657–677, 702–722, 744–764, 774–794, and 828–848; these read IAAV…FGGL, FSLL…LLVF, IGFW…SFLV, IFAF…LIKV, and PNTA…AFFL. Residues 657–1170 are membrane (anion exchange); the sequence is IAAVIFIYFA…DEYNEIHMLV (514 aa). Over 849-863 the chain is Cytoplasmic; sequence RKLRNSRFLGGKVRR. 5 helical membrane passes run 864–884, 919–939, 966–986, 1020–1063, and 1104–1124; these read VIGD…DILI, FPVW…ILIF, LLLI…WLTA, RVTG…LTGI, and IVLL…FILI.

Belongs to the anion exchanger (TC 2.A.31) family. In terms of tissue distribution, widely expressed at low levels.

The protein resides in the cell membrane. It carries out the reaction hydrogencarbonate(in) + chloride(out) = hydrogencarbonate(out) + chloride(in). In terms of biological role, sodium-independent anion exchanger which mediates the electroneutral exchange of chloride for bicarbonate ions across the cell membrane. May be involved in the regulation of intracellular pH, and the modulation of cardiac action potential. The protein is Anion exchange protein 3 of Danio rerio (Zebrafish).